A 436-amino-acid polypeptide reads, in one-letter code: UPF0597 protein YhaM (436 aa).

This sequence belongs to the UPF0597 family.

The chain is UPF0597 protein YhaM from Escherichia coli O6:H1 (strain CFT073 / ATCC 700928 / UPEC).